The chain runs to 177 residues: Large ribosomal subunit protein uL6 (177 aa).

The protein belongs to the universal ribosomal protein uL6 family. As to quaternary structure, part of the 50S ribosomal subunit.

Functionally, this protein binds to the 23S rRNA, and is important in its secondary structure. It is located near the subunit interface in the base of the L7/L12 stalk, and near the tRNA binding site of the peptidyltransferase center. This Pseudomonas fluorescens (strain Pf0-1) protein is Large ribosomal subunit protein uL6.